A 278-amino-acid polypeptide reads, in one-letter code: Transcription initiation factor TFIID subunit 9 (278 aa).

The disordered stretch occupies residues 193 to 278 (TTTKTVGSSG…EEEEFEFVTN (86 aa)). The segment covering 200–210 (SSGGSGGGGGQ) has biased composition (gly residues). Residues 231–240 (AAAVGSIAGA) are compositionally biased toward low complexity. Residues 241-259 (SGSGAGSASGGGGGGGSSG) are compositionally biased toward gly residues. The span at 269 to 278 (EEEEFEFVTN) shows a compositional bias: acidic residues.

The protein belongs to the TAF9 family. In terms of assembly, belongs to the TFIID complex which is composed of TATA binding protein (Tbp) and a number of TBP-associated factors (TAFs). Taf9 and Taf6 exist as a heterotetramer. Interacts with e(y)2.

It localises to the nucleus. Its function is as follows. TFIID is a multimeric protein complex that plays a central role in mediating promoter responses to various activators and repressors. The sequence is that of Transcription initiation factor TFIID subunit 9 from Drosophila melanogaster (Fruit fly).